Here is a 305-residue protein sequence, read N- to C-terminus: Cytochrome c biogenesis protein CcsA (305 aa).

A run of 8 helical transmembrane segments spans residues 13 to 33 (IYFS…VYPV), 42 to 62 (KGII…WFYS), 70 to 90 (LYES…FIDI), 97 to 117 (WIGV…TLIL), 135 to 155 (WLIM…CGSL), 212 to 232 (YTIV…AVWA), 242 to 262 (WDPK…YIHI), and 276 to 296 (VASL…ILGI).

It belongs to the CcmF/CycK/Ccl1/NrfE/CcsA family. In terms of assembly, may interact with Ccs1.

It localises to the plastid. The protein resides in the chloroplast thylakoid membrane. In terms of biological role, required during biogenesis of c-type cytochromes (cytochrome c6 and cytochrome f) at the step of heme attachment. The sequence is that of Cytochrome c biogenesis protein CcsA from Welwitschia mirabilis (Tree tumbo).